The primary structure comprises 62 residues: Small ribosomal subunit protein uS14 (62 aa).

The Zn(2+) site is built by Cys25, Cys28, Cys41, and Cys44.

The protein belongs to the universal ribosomal protein uS14 family. Zinc-binding uS14 subfamily. As to quaternary structure, part of the 30S ribosomal subunit. Contacts proteins S3 and S10. Zn(2+) serves as cofactor.

Functionally, binds 16S rRNA, required for the assembly of 30S particles and may also be responsible for determining the conformation of the 16S rRNA at the A site. The chain is Small ribosomal subunit protein uS14 from Sulfurihydrogenibium sp. (strain YO3AOP1).